The following is a 502-amino-acid chain: Alpha-globin transcription factor CP2 (502 aa).

The 238-residue stretch at 63–300 folds into the Grh/CP2 DB domain; the sequence is EILPFQYVLC…SPGFNSSHSS (238 aa). Residues 133 to 386 are DNA-binding; sequence EHQQLEGWRW…LFNALKGRMV (254 aa). Positions 241 to 265 are enriched in basic and acidic residues; the sequence is KGADRKQKIDREKMEKRTPHEKEKY. Disordered regions lie at residues 241-268 and 294-326; these read KGAD…YQPS and FNSS…NLLP. Ser-353 carries the post-translational modification Phosphoserine.

It belongs to the grh/CP2 family. CP2 subfamily. Binds to DNA as a dimer. Interacts with UBP1 and PIAS1, and is probably part of a complex containing TFCP2, UBP1 and PIAS1. Component of the SSP (stage selector protein) complex, which appears to be a heteromer of TFCP2 and 2 copies of NFE4.

Its subcellular location is the nucleus. In terms of biological role, binds a variety of cellular promoters including fibrinogen, alpha-globin promoters. Activation of the alpha-globin promoter in erythroid cells is via synergistic interaction with UBP1. Functions as part of the SSP (stage selector protein) complex. Facilitates the interaction of the gamma-globin genes with enhancer elements contained in the locus control region in fetal erythroid cells. Interacts by binding to the stage selector element (SSE) in the proximal gamma-globin promoter. The chain is Alpha-globin transcription factor CP2 (Tfcp2) from Mus musculus (Mouse).